Here is a 367-residue protein sequence, read N- to C-terminus: C-glycoside deglycosidase alpha subunit (367 aa).

Mg(2+) is bound at residue Glu-146. His-148 (proton acceptor) is an active-site residue. Asp-178, His-276, and Glu-312 together coordinate Mg(2+).

Belongs to the C-glycoside deglycosidase alpha subunit family. As to quaternary structure, heterodimer composed of an alpha subunit (CarB1) and a beta subunit (CarC1). Mg(2+) serves as cofactor.

It catalyses the reaction 3''-dehydroisovitexin = 1,5-anhydro-D-erythro-hex-1-en-3-ulose + apigenin. Its activity is regulated as follows. Activity is strongly reduced in the presence of chelating agents. Its function is as follows. Carbon-carbon bond-cleaving enzyme which participates in the metabolism of C-glycosides. Acts on the C6-glycosylated compound 3''-dehydroisovitexin (3''-oxo-isovitexin). Shows weak activity with 3''-dehydroisoorientin (3''-oxo-homoorientin) and 3'-dehydromangiferin (3'-oxo-mangiferin). In Arthrobacter globiformis (strain ATCC 8010 / DSM 20124 / JCM 1332 / NBRC 12137 / NCIMB 8907 / NRRL B-2979 / 168), this protein is C-glycoside deglycosidase alpha subunit.